Here is a 233-residue protein sequence, read N- to C-terminus: Ubiquitin carboxyl-terminal hydrolase isozyme L4 (233 aa).

The region spanning 5 to 232 is the UCH catalytic domain; the sequence is RWLPLEANPE…LRFNAIALSA (228 aa). The interval 8–13 is interaction with ubiquitin; that stretch reads PLEANP. C95 acts as the Nucleophile in catalysis. S133 carries the post-translational modification Phosphoserine. The active-site Proton donor is H172. An interaction with ubiquitin region spans residues 222 to 227; that stretch reads ELRFNA.

It belongs to the peptidase C12 family. In terms of tissue distribution, expressed in various tissues at low level.

It is found in the cytoplasm. The enzyme catalyses Thiol-dependent hydrolysis of ester, thioester, amide, peptide and isopeptide bonds formed by the C-terminal Gly of ubiquitin (a 76-residue protein attached to proteins as an intracellular targeting signal).. Ubiquitin-protein hydrolase is involved both in the processing of ubiquitin precursors and of ubiquitinated proteins. This enzyme is a thiol protease that recognizes and hydrolyzes a peptide bond at the C-terminal glycine of ubiquitin. The sequence is that of Ubiquitin carboxyl-terminal hydrolase isozyme L4 (Uchl4) from Mus musculus (Mouse).